Here is a 334-residue protein sequence, read N- to C-terminus: Ventral anterior homeobox 1 (334 aa).

Over residues 1–34 the composition is skewed to basic and acidic residues; it reads MFGKPDKMDVRCHSDAEAARVSKNAHKESRESKG. Residues 1 to 41 form a disordered region; it reads MFGKPDKMDVRCHSDAEAARVSKNAHKESRESKGAEGNLPA. The homeobox DNA-binding region spans 100–159; it reads PKRTRTSFTAEQLYRLEMEFQRCQYVVGRERTELARQLNLSETQVKVWFQNRRTKQKKDQ. Disordered regions lie at residues 234 to 263 and 314 to 334; these read PGPA…GLHA and SAFE…KALD. Basic and acidic residues predominate over residues 323 to 334; sequence NNKEGAEKKALD.

This sequence belongs to the EMX homeobox family.

The protein localises to the nucleus. Transcription factor that may function in dorsoventral specification of the forebrain. Required for axon guidance and major tract formation in the developing forebrain. May contribute to the differentiation of the neuroretina, pigmented epithelium and optic stalk. The protein is Ventral anterior homeobox 1 (VAX1) of Homo sapiens (Human).